The primary structure comprises 185 residues: MAGELIKEAESNMKKTIEVVKKEFASLRAGRATPALLDKVMVNYYGTPTPVNQLANISVPEARLLVVQPWDKTVLPEIERAILKSDLGITPASDGNVIRLAIPQLTQERRAELMKVIKKKAEEGRVAIRNIRRDTNEQLKSQQKDGKMSEDELKRSQDEVQKLTDRYIKEIDSLLSTKEQEIMQV.

Positions 136–159 are disordered; the sequence is NEQLKSQQKDGKMSEDELKRSQDE.

This sequence belongs to the RRF family.

It localises to the cytoplasm. In terms of biological role, responsible for the release of ribosomes from messenger RNA at the termination of protein biosynthesis. May increase the efficiency of translation by recycling ribosomes from one round of translation to another. This is Ribosome-recycling factor from Pelotomaculum thermopropionicum (strain DSM 13744 / JCM 10971 / SI).